A 203-amino-acid polypeptide reads, in one-letter code: Outer-membrane lipoprotein carrier protein (203 aa).

Positions 1 to 21 are cleaved as a signal peptide; sequence MKKLLVACCLLSGFASTSVLA.

The protein belongs to the LolA family. Monomer.

Its subcellular location is the periplasm. Its function is as follows. Participates in the translocation of lipoproteins from the inner membrane to the outer membrane. Only forms a complex with a lipoprotein if the residue after the N-terminal Cys is not an aspartate (The Asp acts as a targeting signal to indicate that the lipoprotein should stay in the inner membrane). This chain is Outer-membrane lipoprotein carrier protein, found in Serratia proteamaculans (strain 568).